Here is a 359-residue protein sequence, read N- to C-terminus: Acyl-CoA Delta-9 desaturase (359 aa).

Helical transmembrane passes span 51–71 (VILF…AFTS) and 74–94 (IATT…ITGG). Fe cation-binding residues include histidine 96, histidine 101, histidine 133, histidine 136, and histidine 137. Positions 96–101 (HRLWAH) match the Histidine box-1 motif. The Histidine box-2 motif lies at 133 to 137 (HRVHH). A run of 2 helical transmembrane segments spans residues 194 to 214 (YLIL…VYMW) and 222 to 244 (WFVA…NSAA). Fe cation is bound by residues histidine 245, histidine 274, histidine 277, and histidine 278. Positions 274–278 (HNYHH) match the Histidine box-3 motif.

The protein belongs to the fatty acid desaturase type 1 family. The cofactor is Fe(2+).

It is found in the membrane. It carries out the reaction octadecanoyl-CoA + 2 Fe(II)-[cytochrome b5] + O2 + 2 H(+) = (9Z)-octadecenoyl-CoA + 2 Fe(III)-[cytochrome b5] + 2 H2O. The enzyme catalyses hexadecanoyl-CoA + 2 Fe(II)-[cytochrome b5] + O2 + 2 H(+) = (9Z)-hexadecenoyl-CoA + 2 Fe(III)-[cytochrome b5] + 2 H2O. In terms of biological role, catalyzes the formation of a Delta9 double bond, acting on saturated fatty acyl substrates like palmitoyl-CoA (hexadecanoyl-CoA) and stearoyl-CoA (octadecanoyl-CoA) with higher desaturation activity on octadecanoyl-CoA than hexadecanoyl-CoA. The chain is Acyl-CoA Delta-9 desaturase from Acheta domesticus (House cricket).